We begin with the raw amino-acid sequence, 398 residues long: Succinate--CoA ligase [ADP-forming] subunit beta (398 aa).

The ATP-grasp domain occupies 9 to 254 (KALLGEFGVP…ETEEDAKEIE (246 aa)). ATP contacts are provided by residues Lys46, 53–55 (GRG), Glu109, Ser112, and Glu117. Asn209 and Asp223 together coordinate Mg(2+). Residues Asn274 and 331–333 (GIM) contribute to the substrate site.

The protein belongs to the succinate/malate CoA ligase beta subunit family. As to quaternary structure, heterotetramer of two alpha and two beta subunits. Requires Mg(2+) as cofactor.

The catalysed reaction is succinate + ATP + CoA = succinyl-CoA + ADP + phosphate. The enzyme catalyses GTP + succinate + CoA = succinyl-CoA + GDP + phosphate. It functions in the pathway carbohydrate metabolism; tricarboxylic acid cycle; succinate from succinyl-CoA (ligase route): step 1/1. In terms of biological role, succinyl-CoA synthetase functions in the citric acid cycle (TCA), coupling the hydrolysis of succinyl-CoA to the synthesis of either ATP or GTP and thus represents the only step of substrate-level phosphorylation in the TCA. The beta subunit provides nucleotide specificity of the enzyme and binds the substrate succinate, while the binding sites for coenzyme A and phosphate are found in the alpha subunit. The polypeptide is Succinate--CoA ligase [ADP-forming] subunit beta (Bradyrhizobium diazoefficiens (strain JCM 10833 / BCRC 13528 / IAM 13628 / NBRC 14792 / USDA 110)).